A 519-amino-acid chain; its full sequence is Tachykinin-like peptides receptor 99D (519 aa).

At 1–100 (MENRSDFEAD…SFAFVVPWWR (100 aa)) the chain is on the extracellular side. Asparagine 3, asparagine 19, asparagine 22, and asparagine 61 each carry an N-linked (GlcNAc...) asparagine glycan. The helical transmembrane segment at 101–123 (QVLWSILFGGMVIVATGGNLIVV) threads the bilayer. The Cytoplasmic segment spans residues 124-134 (WIVMTTKRMRT). A helical transmembrane segment spans residues 135-155 (VTNYFIVNLSIADAMVSSLNV). Residues 156-175 (TFNYYYMLDSDWPFGEFYCK) are Extracellular-facing. The cysteines at positions 174 and 254 are disulfide-linked. The helical transmembrane segment at 176 to 197 (LSQFIAMLSICASVFTLMAISI) threads the bilayer. The Cytoplasmic portion of the chain corresponds to 198-217 (DRYVAIIRPLQPRMSKRCNL). Residues 218-238 (AIAAVIWLASTLISCPMMIIY) traverse the membrane as a helical segment. Residues 239 to 270 (RTEEVPVRGLSNRTVCYPEWPDGPTNHSTMES) lie on the Extracellular side of the membrane. The helical transmembrane segment at 271 to 292 (LYNILIIILTYFLPIVSMTVTY) threads the bilayer. At 293 to 324 (SRVGIELWGSKTIGECTPRQVENVRSKRRVVK) the chain is on the cytoplasmic side. The helical transmembrane segment at 325-346 (MMIVVVLIFAICWLPFHSYFII) threads the bilayer. Residues 347 to 361 (TSCYPAITEAPFIQE) lie on the Extracellular side of the membrane. A helical transmembrane segment spans residues 362–384 (LYLAIYWLAMSNSMYNPIIYCWM). The Cytoplasmic portion of the chain corresponds to 385–519 (NSRFRYGFKM…STANTTQLLS (135 aa)). Cysteine 399 is lipidated: S-palmitoyl cysteine. Residues 444-519 (PSSPKSHRIS…STANTTQLLS (76 aa)) are disordered. 2 stretches are compositionally biased toward polar residues: residues 454 to 465 (HSGTGRSATLRN) and 487 to 499 (SYQQEMQQRWSGP). A compositionally biased stretch (low complexity) spans 500 to 519 (NSATAVTNSSSTANTTQLLS).

It belongs to the G-protein coupled receptor 1 family. In terms of tissue distribution, during late embryogenesis (stages 11-15), expressed in the brain and in a specific subset of neurons in each neuromere of the developing ventral ganglion. Expressed in the cortex of the adult brain, which contains the neuronal cell bodies.

The protein localises to the cell membrane. Receptor for tachykinin-like peptides. In Drosophila melanogaster (Fruit fly), this protein is Tachykinin-like peptides receptor 99D (TkR99D).